The sequence spans 518 residues: MALFSAYALAFSLLMIPLILYILRIGRRESGLPPGPSTLPLVGNLHQLPHGGLHLQFTAWAKEFGGIFSLKFGPGTVIVATSPRAVRELIDQKSASTSDRPPSHFSNVITGGNNIGFARYSDYWRRGRRVMHSMLTKKACVNHLTIQRAEASQLMYDYLVEPKEFVAHGQRYANSVITSILAGTRSPHHTSPLVTAFFQMQHEWTHLLTPGAHPPVDMVPFLKYIPGSWKQICAKMKVSQEELYGGMIDACAKRVERGIRNGCFLEGELENKDVDRGLLRGMCSALMEGGSDSTSIYLQSFILMLVAHPEVQAKARAEIDSVVGLDRLPDIEDMDNLPYVSAVIKEVLRLRPITALGAPHYSTQPEVVDGYVIPKNSMIFMNQWGMLHDPDSYDQPESFMPERFLTSPFGTKPGADDTGRSKDIYFGGGRRICVGMHFGQNSLAITSMYLIWAFNLTNAIDPQTKNPIPVDINEYDISLNTIPKPFKCDFQVRSEEHKRMVENAFAEARQVFAPFEQD.

Residues 3–23 (LFSAYALAFSLLMIPLILYIL) form a helical membrane-spanning segment. Cys-433 is a binding site for heme. Asn-455 is a glycosylation site (N-linked (GlcNAc...) asparagine).

This sequence belongs to the cytochrome P450 family. Requires heme as cofactor.

Its subcellular location is the membrane. Its pathway is secondary metabolite biosynthesis. Its function is as follows. Cytochrome P450 monooxygenase, part of the gene cluster that mediates the biosynthesis of melleolides, a range of antifungal and phytotoxic polyketide derivatives composed of an orsellinic acid (OA) moiety esterified to various sesquiterpene alcohols. The first step in melleolides biosynthesis is performed by the delta(6)-protoilludene synthase PRO1 which catalyzes the cyclization of farnesyl diphosphate to protoilludene. The orsellinic acid synthase armB produces OA by condensing acetyl-CoA with 3 malonyl-CoA units in a three-round chain elongation reaction folowed by a C2-C7 ring closure. ArmB further catalyzes the trans-esterification of OA to the various sesquiterpene alcohols resulting from the hydroxylation of protoilludene. The melleolides cluster also includes 5 cytochrome P450 monooxygenases, 4 NAD(+)-dependent oxidoreductases, one flavin-dependent oxidoreductase, and one O-methyltransferase. The cytochrome P450 monooxygenases may be involved in protoilludene hydroxylation to elaborate melleolides with multiple alcohol groups, such as melleolide D, which carries alcohol functionalities at C-4, C-5, C-10, and C-13. The role of the NAD(+)-dependent enzymes remains unknown. Numerous melleolides, including arnamial, show 5'-O-methylation of the aromatic moiety which may be catalyzed by the methyltransferase encoded in the cluster. The flavin-dependent oxidoreductase might represent the dehydrogenase yielding the aldehyde in position 1 of arnamial and other melleolides. Finally, several halogenase localized outside of the cluster, are able to catalyze the transfer of a single chlorine atom to the melleolide backbone, resulting in a 6'-chloromelleolide product. This Armillaria gallica (Bulbous honey fungus) protein is Cytochrome P450 monooxygenase ARMGADRAFT_1018417.